A 177-amino-acid polypeptide reads, in one-letter code: Large ribosomal subunit protein uL6 (177 aa).

This sequence belongs to the universal ribosomal protein uL6 family. As to quaternary structure, part of the 50S ribosomal subunit.

Its function is as follows. This protein binds to the 23S rRNA, and is important in its secondary structure. It is located near the subunit interface in the base of the L7/L12 stalk, and near the tRNA binding site of the peptidyltransferase center. This chain is Large ribosomal subunit protein uL6, found in Janthinobacterium sp. (strain Marseille) (Minibacterium massiliensis).